The following is a 178-amino-acid chain: Cytochrome b6-f complex iron-sulfur subunit 2 (178 aa).

A helical membrane pass occupies residues 17–36; it reads LLNFFTGAIVATTASAAIYP. The Rieske domain maps to 61 to 161; sequence GHPIPASQIL…VQVKDDYIWI (101 aa). The [2Fe-2S] cluster site is built by Cys-107, His-109, Cys-125, and His-128. An intrachain disulfide couples Cys-112 to Cys-127.

The protein belongs to the Rieske iron-sulfur protein family. As to quaternary structure, the 4 large subunits of the cytochrome b6-f complex are cytochrome b6, subunit IV (17 kDa polypeptide, PetD), cytochrome f and the Rieske protein, while the 4 small subunits are PetG, PetL, PetM and PetN. The complex functions as a dimer. Requires [2Fe-2S] cluster as cofactor.

Its subcellular location is the cellular thylakoid membrane. It catalyses the reaction 2 oxidized [plastocyanin] + a plastoquinol + 2 H(+)(in) = 2 reduced [plastocyanin] + a plastoquinone + 4 H(+)(out). In terms of biological role, component of the cytochrome b6-f complex, which mediates electron transfer between photosystem II (PSII) and photosystem I (PSI), cyclic electron flow around PSI, and state transitions. This Nostoc sp. (strain PCC 7120 / SAG 25.82 / UTEX 2576) protein is Cytochrome b6-f complex iron-sulfur subunit 2.